Here is a 221-residue protein sequence, read N- to C-terminus: 2-amino-5-formylamino-6-ribosylaminopyrimidin-4(3H)-one 5'-monophosphate deformylase (221 aa).

Fe cation-binding residues include glutamate 29, histidine 31, aspartate 40, and histidine 108.

It belongs to the creatininase superfamily. FAPy deformylase family. As to quaternary structure, homodimer. The cofactor is Fe(2+). Zn(2+) is required as a cofactor.

The enzyme catalyses 2-amino-5-formylamino-6-(5-phospho-D-ribosylamino)pyrimidin-4(3H)-one + H2O = 2,5-diamino-6-(1-D-ribosylamino)pyrimidin-4(3H)-one 5'-phosphate + formate + H(+). It functions in the pathway cofactor biosynthesis; coenzyme F420 biosynthesis. It participates in cofactor biosynthesis; riboflavin biosynthesis. Its function is as follows. Catalyzes the hydrolysis of the formamide of 2-amino-5-formylamino-6-ribosylamino-4(3H)-pyrimidinone 5'-monophosphate (FAPy) to form 2,5-diamino-6-ribosylamino-4(3H)-pyrimidinone 5'-phosphate (APy). The polypeptide is 2-amino-5-formylamino-6-ribosylaminopyrimidin-4(3H)-one 5'-monophosphate deformylase (Methanococcus maripaludis (strain C7 / ATCC BAA-1331)).